We begin with the raw amino-acid sequence, 138 residues long: MNISDVAKKTGLTSKAIRFYEEKGLVTPPLRSENGYRTYTQKHLNELTLLRQARQVGFNLEECGELVNLFNDPRRHSADVKKRTLEKVAEIERHISELQSMRDQLLALAESCPGDDSADCPIIDNLSGCCHHKAQKPR.

Residues 1–69 form the HTH merR-type domain; that stretch reads MNISDVAKKT…LEECGELVNL (69 aa). The H-T-H motif DNA-binding region spans 4-23; sequence SDVAKKTGLTSKAIRFYEEK. The Cu(+) site is built by Cys-112 and Cys-120.

As to quaternary structure, homodimer.

The protein localises to the cytoplasm. Its function is as follows. Regulates the transcription of the copA and cuiD (cueO) genes. Detects cytoplasmic copper stress and activates transcription in response to increasing copper concentrations. This chain is HTH-type transcriptional regulator CueR (cueR), found in Salmonella typhimurium (strain LT2 / SGSC1412 / ATCC 700720).